A 72-amino-acid polypeptide reads, in one-letter code: Neuropeptide IMFamide (72 aa).

The signal sequence occupies residues 1-24 (MMRFTIGVVCLVAVLLSLAEVSEA). Phe-36 carries the post-translational modification Phenylalanine amide. Residues 40 to 72 (GPTEYDQRGKTFTALCEIATEACQAWFPSTENK) constitute a propeptide that is removed on maturation.

Expressed in corpora cardiaca (CC), corpora allata (CA), antennal lobe (AL) and gnathal ganglion (GNG) (at protein level). Expression detected in only a few animals (at protein level).

The protein localises to the secreted. In Agrotis ipsilon (Black cutworm moth), this protein is Neuropeptide IMFamide.